Reading from the N-terminus, the 206-residue chain is Ribosomal RNA large subunit methyltransferase E (206 aa).

Residues Gly-63, Trp-65, Asp-83, Asp-99, and Asp-124 each coordinate S-adenosyl-L-methionine. The Proton acceptor role is filled by Lys-164.

Belongs to the class I-like SAM-binding methyltransferase superfamily. RNA methyltransferase RlmE family.

It localises to the cytoplasm. The enzyme catalyses uridine(2552) in 23S rRNA + S-adenosyl-L-methionine = 2'-O-methyluridine(2552) in 23S rRNA + S-adenosyl-L-homocysteine + H(+). Functionally, specifically methylates the uridine in position 2552 of 23S rRNA at the 2'-O position of the ribose in the fully assembled 50S ribosomal subunit. The polypeptide is Ribosomal RNA large subunit methyltransferase E (Buchnera aphidicola subsp. Acyrthosiphon pisum (strain APS) (Acyrthosiphon pisum symbiotic bacterium)).